Here is a 316-residue protein sequence, read N- to C-terminus: uncharacterized protein (316 aa).

Threonine 126 is a binding site for substrate. The Proton acceptor role is filled by tyrosine 149.

It belongs to the NAD(P)-dependent epimerase/dehydratase family.

This is an uncharacterized protein from Bacillus subtilis (strain 168).